The primary structure comprises 482 residues: UDP-N-acetylmuramate--L-alanine ligase (482 aa).

119–125 serves as a coordination point for ATP; that stretch reads GTHGKTT.

Belongs to the MurCDEF family.

Its subcellular location is the cytoplasm. The enzyme catalyses UDP-N-acetyl-alpha-D-muramate + L-alanine + ATP = UDP-N-acetyl-alpha-D-muramoyl-L-alanine + ADP + phosphate + H(+). Its pathway is cell wall biogenesis; peptidoglycan biosynthesis. Its function is as follows. Cell wall formation. In Cyanothece sp. (strain PCC 7425 / ATCC 29141), this protein is UDP-N-acetylmuramate--L-alanine ligase.